The primary structure comprises 59 residues: MKVFFAVLIALFVCSMVIGIHGGVPINVKCRGSRDCLDPCKKAGMRFGKCINSKCHCTP.

The first 22 residues, 1–22 (MKVFFAVLIALFVCSMVIGIHG), serve as a signal peptide directing secretion. 3 disulfide bridges follow: Cys-30–Cys-50, Cys-36–Cys-55, and Cys-40–Cys-57.

This sequence belongs to the short scorpion toxin superfamily. Potassium channel inhibitor family. Alpha-KTx 03 subfamily. Expressed by the venom gland.

Its subcellular location is the secreted. In terms of biological role, inhibits insect potassium channel. Is at least a 100-fold more potent against the Drosophila Shaker channel than towards its mammalian homologs Kv1.1/KCNA1 and Kv1.3/KCNA3. The protein is Potassium channel toxin alpha-KTx 3.10 of Buthus israelis (Israeli scorpion).